Reading from the N-terminus, the 324-residue chain is Transcription factor TCP24 (324 aa).

A TCP domain is found at 50–108; sequence GKDRHSKVLTSKGLRDRRIRLSVATAIQFYDLQDRLGFDQPSKAVEWLINAASDSITDL. Disordered regions lie at residues 122–215 and 261–297; these read QNQT…PMNH and QRSS…NHQL. The segment covering 127–142 has biased composition (low complexity); that stretch reads SACSSGTSESSLLSLS. The 19-residue stretch at 144 to 162 folds into the R domain; that stretch reads TEIRGKARERARERTAKDR. Residues 144-167 are compositionally biased toward basic and acidic residues; sequence TEIRGKARERARERTAKDRDKDLQ. Polar residues-rich tracts occupy residues 168–192 and 200–212; these read NAHS…NWTG and VQLQ…SQEP. Residues 261–281 show a composition bias toward low complexity; the sequence is QRSSISSSSSSSSPMDSQSIS.

As to quaternary structure, forms a heterodimeric complex with ABAP1. Interacts with SPL. Expressed in cotyledons, particularly in the vascular region, in leaves, roots, stems, buds, flowers and siliques.

Its subcellular location is the nucleus. Functionally, plays a pivotal role in the control of morphogenesis of shoot organs by negatively regulating the expression of boundary-specific genes such as CUC genes, probably through the induction of miRNA (e.g. miR164). In association with ABAP1, exerts a negative role in cell proliferation in leaves, possibly by inhibiting mitotic DNA replication. Participates in ovule development. The polypeptide is Transcription factor TCP24 (TCP24) (Arabidopsis thaliana (Mouse-ear cress)).